The chain runs to 972 residues: FHF complex subunit HOOK-interacting protein 1B (972 aa).

Disordered regions lie at residues 465–548 (APSP…GELE) and 573–644 (SAPY…SWPE). Ser-467 is modified (phosphoserine). The span at 478 to 501 (RGPGSPSVDSSSVTTVPRPSTPSR) shows a compositional bias: low complexity. Residues Ser-510, Ser-523, Ser-529, and Ser-533 each carry the phosphoserine modification. Low complexity predominate over residues 523 to 535 (SPGLSASPASSPG). 2 positions are modified to phosphoserine: Ser-859 and Ser-897.

The protein belongs to the FHIP family. In terms of assembly, component of the FTS/Hook/FHIP complex (FHF complex), composed of AKTIP/FTS, FHIP1B, and one or more members of the Hook family of proteins HOOK1, HOOK2, and HOOK3. The FHF complex associates with the homotypic vesicular sorting complex (the HOPS complex).

Its function is as follows. Component of the FTS/Hook/FHIP complex (FHF complex). The FHF complex may function to promote vesicle trafficking and/or fusion via the homotypic vesicular protein sorting complex (the HOPS complex). FHF complex promotes the distribution of AP-4 complex to the perinuclear area of the cell. This Homo sapiens (Human) protein is FHF complex subunit HOOK-interacting protein 1B.